Consider the following 443-residue polypeptide: GTPase Der (443 aa).

EngA-type G domains lie at 3–167 and 176–349; these read PVIA…PEEK and IKIA…QSIQ. GTP-binding positions include 9–16, 56–60, 119–122, 182–189, 229–233, and 294–297; these read GRPNVGKS, DTGGL, NKAD, DTAGI, and NKWD. Residues 350 to 434 enclose the KH-like domain; sequence QELTTGQLTR…PVHIKLKTDP (85 aa).

This sequence belongs to the TRAFAC class TrmE-Era-EngA-EngB-Septin-like GTPase superfamily. EngA (Der) GTPase family. In terms of assembly, associates with the 50S ribosomal subunit.

Its function is as follows. GTPase that plays an essential role in the late steps of ribosome biogenesis. In Coxiella burnetii (strain CbuG_Q212) (Coxiella burnetii (strain Q212)), this protein is GTPase Der.